We begin with the raw amino-acid sequence, 59 residues long: Large ribosomal subunit protein uL30 (59 aa).

It belongs to the universal ribosomal protein uL30 family. As to quaternary structure, part of the 50S ribosomal subunit.

The protein is Large ribosomal subunit protein uL30 of Nocardia farcinica (strain IFM 10152).